The chain runs to 680 residues: DNA ligase 1 (680 aa).

Residues 35–39 (DAEYD), 84–85 (SL), and Asp-115 contribute to the NAD(+) site. Residue Lys-117 is the N6-AMP-lysine intermediate of the active site. Positions 138, 175, 295, and 319 each coordinate NAD(+). Zn(2+)-binding residues include Cys-413, Cys-416, Cys-431, and Cys-436. The 82-residue stretch at 599–680 (REGSQLQGLK…FANLLKGLDR (82 aa)) folds into the BRCT domain.

This sequence belongs to the NAD-dependent DNA ligase family. LigA subfamily. It depends on Mg(2+) as a cofactor. Mn(2+) is required as a cofactor.

It catalyses the reaction NAD(+) + (deoxyribonucleotide)n-3'-hydroxyl + 5'-phospho-(deoxyribonucleotide)m = (deoxyribonucleotide)n+m + AMP + beta-nicotinamide D-nucleotide.. Its function is as follows. DNA ligase that catalyzes the formation of phosphodiester linkages between 5'-phosphoryl and 3'-hydroxyl groups in double-stranded DNA using NAD as a coenzyme and as the energy source for the reaction. It is essential for DNA replication and repair of damaged DNA. The sequence is that of DNA ligase 1 from Nitratidesulfovibrio vulgaris (strain DP4) (Desulfovibrio vulgaris).